The primary structure comprises 481 residues: UDP-N-acetylmuramoyl-L-alanyl-D-glutamate--L-lysine ligase (481 aa).

Ser-42 contacts UDP-N-acetyl-alpha-D-muramoyl-L-alanyl-D-glutamate. Gly-118–Thr-124 is a binding site for ATP. UDP-N-acetyl-alpha-D-muramoyl-L-alanyl-D-glutamate-binding positions include Asn-158, Thr-160–Thr-161, Ser-187, and Arg-195. An N6-carboxylysine modification is found at Lys-229. The L-lysine recognition motif signature appears at Asp-404–Asn-407.

It belongs to the MurCDEF family. MurE subfamily. Post-translationally, carboxylation is probably crucial for Mg(2+) binding and, consequently, for the gamma-phosphate positioning of ATP.

The protein localises to the cytoplasm. The enzyme catalyses UDP-N-acetyl-alpha-D-muramoyl-L-alanyl-D-glutamate + L-lysine + ATP = UDP-N-acetyl-alpha-D-muramoyl-L-alanyl-gamma-D-glutamyl-L-lysine + ADP + phosphate + H(+). It functions in the pathway cell wall biogenesis; peptidoglycan biosynthesis. Its function is as follows. Catalyzes the addition of L-lysine to the nucleotide precursor UDP-N-acetylmuramoyl-L-alanyl-D-glutamate (UMAG) in the biosynthesis of bacterial cell-wall peptidoglycan. The sequence is that of UDP-N-acetylmuramoyl-L-alanyl-D-glutamate--L-lysine ligase from Streptococcus thermophilus (strain ATCC BAA-491 / LMD-9).